The primary structure comprises 204 residues: Recombination protein RecR (204 aa).

The C4-type zinc finger occupies 61 to 76; sequence CARCNTFSETQICSTC. Residues 84–183 form the Toprim domain; sequence SLLCIVETPA…KVTRIARGIP (100 aa).

Belongs to the RecR family.

May play a role in DNA repair. It seems to be involved in an RecBC-independent recombinational process of DNA repair. It may act with RecF and RecO. The polypeptide is Recombination protein RecR (Polynucleobacter asymbioticus (strain DSM 18221 / CIP 109841 / QLW-P1DMWA-1) (Polynucleobacter necessarius subsp. asymbioticus)).